The chain runs to 295 residues: Protoheme IX farnesyltransferase (295 aa).

9 helical membrane-spanning segments follow: residues 27–46 (IMYLVVLTGITGMIIAPGSI), 50–72 (IAIISTLCIALGSGAAGAINMWY), 93–115 (ISKSSAIELGLVLSVISVTVMMI), 119–136 (YISGILLAISIGFYSFAY), 148–168 (IVIGGIAGAIPPIIGWTSVTS), 175–195 (LILFLIIFMWTPPHFWALSLL), 219–239 (VHILVYSIVLFIITLLPGLFL), 244–264 (LYEICAIPLGITFLFHAFKVF), and 275–295 (MFTYSVAYLFILFICIILASF).

It belongs to the UbiA prenyltransferase family. Protoheme IX farnesyltransferase subfamily.

The protein resides in the cell inner membrane. The catalysed reaction is heme b + (2E,6E)-farnesyl diphosphate + H2O = Fe(II)-heme o + diphosphate. Its pathway is porphyrin-containing compound metabolism; heme O biosynthesis; heme O from protoheme: step 1/1. Converts heme B (protoheme IX) to heme O by substitution of the vinyl group on carbon 2 of heme B porphyrin ring with a hydroxyethyl farnesyl side group. This chain is Protoheme IX farnesyltransferase, found in Ehrlichia canis (strain Jake).